The following is a 267-amino-acid chain: MEMRQPAVAGQFYPLRCENLENELKRCFEGLEIREQEVLGAVCPHAGYMYSGKVAAHVYATLPEADTYVIFGPNHTGYGSPVSVSRETWKTPLGNIDVDLELADGFLGSIVDADELGHKYEHSIEVQLPFLQYRFERDFKILPICMGMQDEETAVEVGNLLADLISESGKRAVIIASSDFTHYETAERAKEIDSEVIDSILNFDISGMYDRLYRRNASVCGYGPITAMLTASKKLGGSRATLLKYANSGDVSGDKDAVVGYAAIIVE.

Belongs to the MEMO1 family.

The sequence is that of MEMO1 family protein MM_1761 from Methanosarcina mazei (strain ATCC BAA-159 / DSM 3647 / Goe1 / Go1 / JCM 11833 / OCM 88) (Methanosarcina frisia).